The primary structure comprises 205 residues: Methylthioribulose-1-phosphate dehydratase (205 aa).

Zn(2+) is bound by residues His96 and His98.

The protein belongs to the aldolase class II family. MtnB subfamily. Zn(2+) serves as cofactor.

The enzyme catalyses 5-(methylsulfanyl)-D-ribulose 1-phosphate = 5-methylsulfanyl-2,3-dioxopentyl phosphate + H2O. It functions in the pathway amino-acid biosynthesis; L-methionine biosynthesis via salvage pathway; L-methionine from S-methyl-5-thio-alpha-D-ribose 1-phosphate: step 2/6. In terms of biological role, catalyzes the dehydration of methylthioribulose-1-phosphate (MTRu-1-P) into 2,3-diketo-5-methylthiopentyl-1-phosphate (DK-MTP-1-P). The chain is Methylthioribulose-1-phosphate dehydratase from Exiguobacterium sp. (strain ATCC BAA-1283 / AT1b).